The chain runs to 170 residues: RNA polymerase sigma factor TcsR (170 aa).

The segment at 122 to 169 is sigma-70 factor domain-4; that stretch reads IKDLTQNEKNILRKIYLHGLRESEISRELNISRQAVNKTHLRALEKLK. The segment at residues 143 to 162 is a DNA-binding region (H-T-H motif); sequence ESEISRELNISRQAVNKTHL.

It belongs to the sigma-70 factor family.

Sigma factors are initiation factors that promote the attachment of RNA polymerase to specific initiation sites and are then released. Transcriptional regulator specifically required to activate expression of the toxin gene locus, composed of tcsL and tcdE/utxA. In Paraclostridium sordellii (strain ATCC 9714 / DSM 2141 / JCM 3814 / LMG 15708 / NCIMB 10717 / 211) (Clostridium sordellii), this protein is RNA polymerase sigma factor TcsR.